The chain runs to 120 residues: 5-hydroxyisourate hydrolase 2 (120 aa).

Substrate is bound by residues His10, Arg48, and Tyr117.

Belongs to the transthyretin family. 5-hydroxyisourate hydrolase subfamily. As to quaternary structure, homotetramer.

It catalyses the reaction 5-hydroxyisourate + H2O = 5-hydroxy-2-oxo-4-ureido-2,5-dihydro-1H-imidazole-5-carboxylate + H(+). Functionally, catalyzes the hydrolysis of 5-hydroxyisourate (HIU) to 2-oxo-4-hydroxy-4-carboxy-5-ureidoimidazoline (OHCU). This chain is 5-hydroxyisourate hydrolase 2, found in Rhizobium meliloti (strain 1021) (Ensifer meliloti).